We begin with the raw amino-acid sequence, 760 residues long: Prolyl endopeptidase (760 aa).

Catalysis depends on charge relay system residues serine 609, aspartate 693, and histidine 730.

It belongs to the peptidase S9A family.

The protein localises to the cytoplasm. It catalyses the reaction Hydrolysis of Pro-|-Xaa &gt;&gt; Ala-|-Xaa in oligopeptides.. Its activity is regulated as follows. Inhibited by chymostatin, Boc-Glu(NHO-Bz)-Pyrrolidide, Z-Pro-L-prolinal dimethyacetal and the peptide H-H-L-P-P-P-V-OH. Functionally, cleaves peptide bonds on the C-terminal side of prolyl residues within peptides that are up to approximately 30 amino acids long. The polypeptide is Prolyl endopeptidase (prep) (Dictyostelium discoideum (Social amoeba)).